The chain runs to 639 residues: MTLEITGSELIKSKLIDAPERSGVYRMFDVNKQVLYVGKAKNLKKRLTNYIKSNLDNKTLRMIANTCFLEYSITNSEVEALLLEAQLIKKFQPKFNILLKDCKSFPFIKLRLEHDFPQLLKYRGKTLSDGKFFGPFASSVDVNTTLTELQKIFKLRSCTDNYFNSRTRPCLQYEIKRCYAPCVGKINKEDYRDLVTQVKDFLQGRTKELQENLSRKMEELSSQMRFEEAAEIRDRIKALSYVQLKAGVSDVVKDADIIAIVEKNGHYCVEVFLYRAGQACGNIPYFPTSTENSTKEEVLEYFLLQFYQKQHVPAAIIINHEINDKENVIEAIKKINNILQLNITVPNKGGKAKLVQNAEINALFSLEQYLKKFAKNQEIIFEIKELFGLSAIPERIEIYDNSHIQGKFAVGVMVVAGKVGFDKKEYRVFNVYAPSLVCHSRESGDPKRLMDSCFRGNGIKNCWGDIKGDDYEMLRQVLTRRLTRLRQEPHKLPSLMIIDGGKGHLGVVKEVMDKFEMNIPFVCMSKGVDRNAGFEQFHVIGKEVFTLDKNLPVMKYLQILRDEAHNFAIKNHRLGRSRAIKISRLDDIEGVGETRKKALLHYFGSYKAVCDATIYELAKVNGINKLLAEMIFNVLHRKN.

The GIY-YIG domain maps to 20–97; the sequence is ERSGVYRMFD…IKKFQPKFNI (78 aa). The UVR domain occupies 207–242; sequence KELQENLSRKMEELSSQMRFEEAAEIRDRIKALSYV.

Belongs to the UvrC family. In terms of assembly, interacts with UvrB in an incision complex.

It localises to the cytoplasm. In terms of biological role, the UvrABC repair system catalyzes the recognition and processing of DNA lesions. UvrC both incises the 5' and 3' sides of the lesion. The N-terminal half is responsible for the 3' incision and the C-terminal half is responsible for the 5' incision. In Rickettsia rickettsii (strain Iowa), this protein is UvrABC system protein C.